The chain runs to 337 residues: 15-cis-phytoene synthase (337 aa).

Belongs to the phytoene/squalene synthase family. It depends on ATP as a cofactor. Mn(2+) is required as a cofactor. The cofactor is Mg(2+).

It carries out the reaction 2 (2E,6E,10E)-geranylgeranyl diphosphate = 15-cis-phytoene + 2 diphosphate. The protein operates within carotenoid biosynthesis; phytoene biosynthesis. Functionally, involved in the biosynthesis of carotenoids. Catalyzes the condensation of two molecules of geranylgeranyl diphosphate (GGPP) to give prephytoene diphosphate (PPPP) and the subsequent rearrangement of the cyclopropylcarbinyl intermediate to yield 15-cis-phytoene. This Synechocystis sp. (strain ATCC 27184 / PCC 6803 / Kazusa) protein is 15-cis-phytoene synthase (crtB).